The chain runs to 543 residues: Cytochrome P450 1B1 (543 aa).

C470 lines the heme pocket.

The protein belongs to the cytochrome P450 family. The cofactor is heme. As to expression, expressed in heart, brain, lung, skeletal muscle, kidney, spleen, thymus, prostate, testis, ovary, small intestine, colon, and peripheral blood leukocytes. Expressed in retinal endothelial cells and umbilical vein endothelial cells (at protein level).

It localises to the endoplasmic reticulum membrane. It is found in the microsome membrane. The protein localises to the mitochondrion. It catalyses the reaction an organic molecule + reduced [NADPH--hemoprotein reductase] + O2 = an alcohol + oxidized [NADPH--hemoprotein reductase] + H2O + H(+). The enzyme catalyses 17beta-estradiol + reduced [NADPH--hemoprotein reductase] + O2 = 2-hydroxy-17beta-estradiol + oxidized [NADPH--hemoprotein reductase] + H2O + H(+). It carries out the reaction 17beta-estradiol + reduced [NADPH--hemoprotein reductase] + O2 = 4-hydroxy-17beta-estradiol + oxidized [NADPH--hemoprotein reductase] + H2O + H(+). The catalysed reaction is estrone + reduced [NADPH--hemoprotein reductase] + O2 = 2-hydroxyestrone + oxidized [NADPH--hemoprotein reductase] + H2O + H(+). It catalyses the reaction estrone + reduced [NADPH--hemoprotein reductase] + O2 = 4-hydroxyestrone + oxidized [NADPH--hemoprotein reductase] + H2O + H(+). The enzyme catalyses testosterone + reduced [NADPH--hemoprotein reductase] + O2 = 6beta,17beta-dihydroxyandrost-4-en-3-one + oxidized [NADPH--hemoprotein reductase] + H2O + H(+). It carries out the reaction progesterone + reduced [NADPH--hemoprotein reductase] + O2 = 6beta-hydroxyprogesterone + oxidized [NADPH--hemoprotein reductase] + H2O + H(+). The catalysed reaction is progesterone + reduced [NADPH--hemoprotein reductase] + O2 = 16alpha-hydroxyprogesterone + oxidized [NADPH--hemoprotein reductase] + H2O + H(+). It catalyses the reaction all-trans-retinol + reduced [NADPH--hemoprotein reductase] + O2 = all-trans-retinal + oxidized [NADPH--hemoprotein reductase] + 2 H2O + H(+). The enzyme catalyses all-trans-retinal + reduced [NADPH--hemoprotein reductase] + O2 = all-trans-retinoate + oxidized [NADPH--hemoprotein reductase] + H2O + 2 H(+). It carries out the reaction (5Z,8Z,11Z,14Z)-eicosatetraenoate + reduced [NADPH--hemoprotein reductase] + O2 = (8R,9S)-epoxy-(5Z,11Z,14Z)-eicosatrienoate + oxidized [NADPH--hemoprotein reductase] + H2O + H(+). The catalysed reaction is (5Z,8Z,11Z,14Z)-eicosatetraenoate + reduced [NADPH--hemoprotein reductase] + O2 = (11R,12S)-epoxy-(5Z,8Z,14Z)-eicosatrienoate + oxidized [NADPH--hemoprotein reductase] + H2O + H(+). It catalyses the reaction (5Z,8Z,11Z,14Z)-eicosatetraenoate + reduced [NADPH--hemoprotein reductase] + O2 = (11S,12R)-epoxy-(5Z,8Z,14Z)-eicosatrienoate + oxidized [NADPH--hemoprotein reductase] + H2O + H(+). The enzyme catalyses (5Z,8Z,11Z,14Z)-eicosatetraenoate + reduced [NADPH--hemoprotein reductase] + O2 = (14R,15S)-epoxy-(5Z,8Z,11Z)-eicosatrienoate + oxidized [NADPH--hemoprotein reductase] + H2O + H(+). It carries out the reaction (5S)-hydroperoxy-(6E,8Z,11Z,14Z)-eicosatetraenoate = 5-oxo-(6E,8Z,11Z,14Z)-eicosatetraenoate + H2O. The catalysed reaction is (12S)-hydroperoxy-(5Z,8Z,10E,14Z)-eicosatetraenoate = 12-oxo-(5Z,8Z,10E,14Z)-eicosatetraenoate + H2O. It catalyses the reaction (13S)-hydroperoxy-(9Z,11E)-octadecadienoate = 13-oxo-(9Z,11E)-octadecadienoate + H2O. The enzyme catalyses (15S)-hydroperoxy-(5Z,8Z,11Z,13E)-eicosatetraenoate = 15-oxo-(5Z,8Z,11Z,13E)-eicosatetraenoate + H2O. The protein operates within steroid hormone biosynthesis. It participates in cofactor metabolism; retinol metabolism. It functions in the pathway lipid metabolism; arachidonate metabolism. Its activity is regulated as follows. Enzyme activity is increased by liposomes containing anionic phospholipids, phosphatidic acid and cardiolipin. Inhibited by naringenin with an IC(50) of 5 uM. Enzyme activity is increased by cytochrome b5. A cytochrome P450 monooxygenase involved in the metabolism of various endogenous substrates, including fatty acids, steroid hormones and vitamins. Mechanistically, uses molecular oxygen inserting one oxygen atom into a substrate, and reducing the second into a water molecule, with two electrons provided by NADPH via cytochrome P450 reductase (NADPH--hemoprotein reductase). Exhibits catalytic activity for the formation of hydroxyestrogens from estrone (E1) and 17beta-estradiol (E2), namely 2- and 4-hydroxy E1 and E2. Displays a predominant hydroxylase activity toward E2 at the C-4 position. Metabolizes testosterone and progesterone to B or D ring hydroxylated metabolites. May act as a major enzyme for all-trans retinoic acid biosynthesis in extrahepatic tissues. Catalyzes two successive oxidative transformation of all-trans retinol to all-trans retinal and then to the active form all-trans retinoic acid. Catalyzes the epoxidation of double bonds of certain PUFA. Converts arachidonic acid toward epoxyeicosatrienoic acid (EpETrE) regioisomers, 8,9-, 11,12-, and 14,15- EpETrE, that function as lipid mediators in the vascular system. Additionally, displays dehydratase activity toward oxygenated eicosanoids hydroperoxyeicosatetraenoates (HpETEs). This activity is independent of cytochrome P450 reductase, NADPH, and O2. Also involved in the oxidative metabolism of xenobiotics, particularly converting polycyclic aromatic hydrocarbons and heterocyclic aryl amines procarcinogens to DNA-damaging products. Plays an important role in retinal vascular development. Under hyperoxic O2 conditions, promotes retinal angiogenesis and capillary morphogenesis, likely by metabolizing the oxygenated products generated during the oxidative stress. Also, contributes to oxidative homeostasis and ultrastructural organization and function of trabecular meshwork tissue through modulation of POSTN expression. The chain is Cytochrome P450 1B1 from Homo sapiens (Human).